A 228-amino-acid chain; its full sequence is Eukaryotic translation initiation factor 4E-2 (228 aa).

C130 and C134 form a disulfide bridge.

The protein belongs to the eukaryotic initiation factor 4E family. EIF4F is a multi-subunit complex, the composition of which varies with external and internal environmental conditions. It is composed of at least eIF4A, eIF4E and eIF4G. eIF4E is also known to interact with other partners. In terms of tissue distribution, highly expressed in all somatic tissues.

Functionally, recognizes and binds the 7-methylguanosine-containing mRNA cap during an early step in the initiation of protein synthesis and facilitates ribosome binding by inducing the unwinding of the mRNAs secondary structures. All 5 eIF4E proteins bind monomethyl cap structures. Only ife-1, ife-2 and ife-5 bind trimethyl cap structures which result from trans-splicing. Translation of trimethyl cap structure mRNAs may be regulated by intracellular redox state; disulfide bonds change the width and depth of the cap-binding cavity determining selectivity to mRNA caps. Probably by regulating mRNA translation in somatic cells, negatively regulates lifespan independently of daf-2/insulin and let-363/TOR pathways. Negatively regulates resistance to oxidative stress. May play a role in embryonic development. The chain is Eukaryotic translation initiation factor 4E-2 (ife-2) from Caenorhabditis elegans.